Reading from the N-terminus, the 669-residue chain is Pre-mRNA-processing factor 39 (669 aa).

Residues 1–10 (MQNSHMDEYR) are compositionally biased toward basic and acidic residues. The segment at 1–23 (MQNSHMDEYRNSSNGSTGNSSEV) is disordered. Residues 11-23 (NSSNGSTGNSSEV) show a composition bias toward low complexity. Residue Ser44 is modified to Phosphoserine. 7 HAT repeats span residues 109–141 (NHLM…LEKR), 143–175 (DNIK…FLKE), 183–218 (ETNN…WENE), 220–253 (GNLR…HVQN), 333–365 (TFEE…FEIE), 367–399 (GTHE…YMEN), and 404–436 (GVRH…QQGN). Residues 599-624 (KEQDSLKRKAENGSEEPEEKKAHTED) are compositionally biased toward basic and acidic residues. The segment at 599–634 (KEQDSLKRKAENGSEEPEEKKAHTEDTTSSSTQMID) is disordered. Polar residues predominate over residues 625–634 (TTSSSTQMID).

This sequence belongs to the PRP39 family.

Its subcellular location is the nucleus. Involved in pre-mRNA splicing. The protein is Pre-mRNA-processing factor 39 (PRPF39) of Homo sapiens (Human).